A 78-amino-acid polypeptide reads, in one-letter code: Apolipoprotein C-I (78 aa).

The first 26 residues, 1-26, serve as a signal peptide directing secretion; that stretch reads MRLILWLPVLVVVLLMVLEGPAPAQG.

The protein belongs to the apolipoprotein C1 family.

It is found in the secreted. Inhibitor of lipoprotein binding to the low density lipoprotein (LDL) receptor, LDL receptor-related protein, and very low density lipoprotein (VLDL) receptor. Associates with high density lipoproteins (HDL) and the triacylglycerol-rich lipoproteins in the plasma and makes up about 10% of the protein of the VLDL and 2% of that of HDL. Appears to interfere directly with fatty acid uptake and is also the major plasma inhibitor of cholesteryl ester transfer protein (CETP). Binds free fatty acids and reduces their intracellular esterification. Modulates the interaction of APOE with beta-migrating VLDL and inhibits binding of beta-VLDL to the LDL receptor-related protein. The protein is Apolipoprotein C-I (APOC1) of Puma concolor (Mountain lion).